Consider the following 432-residue polypeptide: Ornithine decarboxylase (432 aa).

Lys-98 carries the post-translational modification N6-(pyridoxal phosphate)lysine. Residues Ser-229, Gly-266, and 296–299 contribute to the pyridoxal 5'-phosphate site; that span reads EPGR. 341–342 is a binding site for substrate; sequence FD. The active-site Proton donor; shared with dimeric partner is the Cys-377. Residue Asp-378 participates in substrate binding. Tyr-407 lines the pyridoxal 5'-phosphate pocket.

It belongs to the Orn/Lys/Arg decarboxylase class-II family. As to quaternary structure, homodimer. Only the dimer is catalytically active, as the active sites are constructed of residues from both monomers. Pyridoxal 5'-phosphate serves as cofactor.

It is found in the cytoplasm. It carries out the reaction L-ornithine + H(+) = putrescine + CO2. It functions in the pathway amine and polyamine biosynthesis; putrescine biosynthesis via L-ornithine pathway; putrescine from L-ornithine: step 1/1. Its activity is regulated as follows. Inhibited by antizyme (AZ) OAZ1 in response to polyamine levels. AZ inhibits the assembly of the functional homodimer by binding to ODC monomers and targeting them for ubiquitin-independent proteolytic destruction by the 26S proteasome. In terms of biological role, catalyzes the first and rate-limiting step of polyamine biosynthesis that converts ornithine into putrescine, which is the precursor for the polyamines, spermidine and spermine. Polyamines are essential for cell proliferation and are implicated in cellular processes, ranging from DNA replication to apoptosis. The sequence is that of Ornithine decarboxylase (spe1) from Schizosaccharomyces pombe (strain 972 / ATCC 24843) (Fission yeast).